The chain runs to 450 residues: C4-dicarboxylate transport protein (450 aa).

8 helical membrane passes run 25–45, 56–76, 90–110, 162–182, 200–220, 234–254, 319–339, and 367–387; these read VVFA…YGAA, LIKM…IASM, MAYF…VANV, ILQV…VGDA, LVNI…AFTI, LVLT…GAVA, IYMT…LTLG, and AATL…ILGV.

The protein belongs to the dicarboxylate/amino acid:cation symporter (DAACS) (TC 2.A.23) family.

It localises to the cell inner membrane. In terms of biological role, responsible for the transport of dicarboxylates such as succinate, fumarate, and malate from the periplasm across the membrane. The chain is C4-dicarboxylate transport protein from Acidovorax ebreus (strain TPSY) (Diaphorobacter sp. (strain TPSY)).